We begin with the raw amino-acid sequence, 211 residues long: Putative ankyrin repeat protein R810 (211 aa).

5 ANK repeats span residues 31–61 (TKFI…NLKY), 72–101 (NIND…DICA), 103–131 (QNSP…KFFG), 133–162 (YSSA…FCLE), and 163–191 (MEIA…SYFD).

The chain is Putative ankyrin repeat protein R810 from Acanthamoeba polyphaga mimivirus (APMV).